Consider the following 216-residue polypeptide: Flagellar transcriptional regulator FlhC (216 aa).

4 residues coordinate Zn(2+): Cys137, Cys140, Cys157, and Cys160.

The protein belongs to the FlhC family. Heterohexamer composed of two FlhC and four FlhD subunits. Each FlhC binds a FlhD dimer, forming a heterotrimer, and a hexamer assembles by dimerization of two heterotrimers. Requires Zn(2+) as cofactor.

It is found in the cytoplasm. Functionally, functions in complex with FlhD as a master transcriptional regulator that regulates transcription of several flagellar and non-flagellar operons by binding to their promoter region. Activates expression of class 2 flagellar genes, including fliA, which is a flagellum-specific sigma factor that turns on the class 3 genes. Also regulates genes whose products function in a variety of physiological pathways. The polypeptide is Flagellar transcriptional regulator FlhC (Paraburkholderia atlantica).